A 319-amino-acid chain; its full sequence is tRNA uridine(34) hydroxylase (319 aa).

The 95-residue stretch at 127–221 (KQEDTVIIDA…YGKDPEVQGE (95 aa)) folds into the Rhodanese domain. Catalysis depends on Cys181, which acts as the Cysteine persulfide intermediate.

It belongs to the TrhO family.

It catalyses the reaction uridine(34) in tRNA + AH2 + O2 = 5-hydroxyuridine(34) in tRNA + A + H2O. In terms of biological role, catalyzes oxygen-dependent 5-hydroxyuridine (ho5U) modification at position 34 in tRNAs. This chain is tRNA uridine(34) hydroxylase, found in Bacillus cereus (strain ZK / E33L).